A 959-amino-acid chain; its full sequence is MSSFGNNAGGGGREYHDDRSNRDHRHGNGGSDAGQRRREDHNSSYQSYRRPDGRQDSYGGGHQGNHGNSYGRREDDRSHSRDNHGGSRYGERDDRGNNGRSADNRYSQSNYNYDSNRGGQHYQRDNHGSKDDRGPMNQYNDHGSNHNSNSRNDQYRQGSYQGDGHSGYRRDDDRRRNDNDQARPYQSNRDSDRNSPRDHHNYNSQSSPRSHQGGQDRYSAPKEDNQRRYDNHQGGHDSYRGQNSGGYSGNNSGEYRNDYRSQQDSRDHRSGGNNSSSGFKNDGGFGGNDNRGFGNNGGGSFGNPNNSYRGNSNNIGGFHRSDGSNSEGVNAPVRAPRDWVPVTRDIDELVRETADRLADCDVGQDRAVEIRNAEKDVRLTSWTNSGLHPTILETLKRIKYNNVRTIQGAMIPQVLDGHDVLGQAETSAGKTAAFGLPIIDKILRMDEETRNKARQDDGPLALILAPTRELAAQIHEALRTYCQNTDIIVLLSYGQSDRARSLNEIRNGCDILIGTCGRIMDFTVKSHISLLHLRFLVFDEADRLLQDMKKDPLGHLGAIIKDAGFMESAATRQTIMTSATFNASVMTVANELMKRLPGQDEMIKIVLANGRLSKRVNLEFFECKGLAEKNAKLREILKQNVNGKTLKTIIFVQKKDQCDACAAKLTSGGMLAQTLHGDRSQDMREKLINDFKSNRVNLLVTTDLLSRGIDVSDLDRVINFDLPDGDPDQGADTFIHRAGRTGRTGRKENGLCVSFVDPQSDRDSLLAPKLVELIISQNLPDLKVPDFLDAMAKSSRGKSGTSGFGQRGGYGGRGGGFGGTGRGRGGGVFGGGGRGGDFGGSGNFGGSGGGGSFGGSGGGGGFGGVKPSGFGGSRNNAEPTSSGGGFGAPKAPTGFPSDNNDASEDAPAAGGFGFSTKAAQDAKKAEESATLGSSTFGTANNADEEPTETGADGNDDDEW.

Residues 1-336 (MSSFGNNAGG…EGVNAPVRAP (336 aa)) are disordered. Basic and acidic residues predominate over residues 71–97 (GRREDDRSHSRDNHGGSRYGERDDRGN). Residues 98 to 118 (NGRSADNRYSQSNYNYDSNRG) are compositionally biased toward polar residues. A compositionally biased stretch (basic and acidic residues) spans 122 to 134 (YQRDNHGSKDDRG). A compositionally biased stretch (polar residues) spans 137–160 (NQYNDHGSNHNSNSRNDQYRQGSY). 2 stretches are compositionally biased toward basic and acidic residues: residues 166–181 (SGYR…DNDQ) and 189–201 (RDSD…DHHN). Residues 202–213 (YNSQSSPRSHQG) are compositionally biased toward polar residues. Composition is skewed to basic and acidic residues over residues 219–239 (SAPK…HDSY) and 255–270 (YRND…DHRS). Low complexity predominate over residues 271–280 (GGNNSSSGFK). Residues 281 to 301 (NDGGFGGNDNRGFGNNGGGSF) are compositionally biased toward gly residues. Residues 302–317 (GNPNNSYRGNSNNIGG) are compositionally biased toward low complexity. The Q motif motif lies at 380 to 408 (TSWTNSGLHPTILETLKRIKYNNVRTIQG). Residues 411–599 (IPQVLDGHDV…NELMKRLPGQ (189 aa)) enclose the Helicase ATP-binding domain. 424–431 (AETSAGKT) is a binding site for ATP. A DEAD box motif is present at residues 539 to 542 (DEAD). One can recognise a Helicase C-terminal domain in the interval 632 to 792 (KLREILKQNV…KVPDFLDAMA (161 aa)). Disordered regions lie at residues 793–834 (KSSR…GGGR) and 858–959 (GGGG…DDEW). 2 stretches are compositionally biased toward gly residues: residues 800-834 (GTSG…GGGR) and 858-872 (GGGG…GFGG). The segment covering 930-941 (TLGSSTFGTANN) has biased composition (polar residues). A compositionally biased stretch (acidic residues) spans 942–959 (ADEEPTETGADGNDDDEW).

Belongs to the DEAD box helicase family. DDX3/DED1 subfamily. In terms of assembly, interacts with wago-1, ergo-1 and rde-1. The cofactor is Mg(2+). As to expression, expressed in the soma and germline.

The protein resides in the cytoplasm. It localises to the perinuclear region. The protein localises to the cytoplasmic granule. Its subcellular location is the P-body. The enzyme catalyses ATP + H2O = ADP + phosphate + H(+). Its function is as follows. Probable ATP-dependent RNA helicase involved in RNAi-mediated gene silencing. Specifically required in the endogenous siRNA pathway for biogenesis of secondary endogenous small interfering RNA (siRNA) intermediates called 22G-RNAs. May associate with and recruit rde-10 to primary siRNA-targeted mRNA for secondary siRNA synthesis. May be recruited to target mRNAs by rde-1 and/or ergo-1. The sequence is that of DEAD-box ATP-dependent RNA helicase rde-12 from Caenorhabditis elegans.